Here is a 256-residue protein sequence, read N- to C-terminus: Spore coat polysaccharide biosynthesis protein SpsA (256 aa).

Cys155 and Cys243 form a disulfide bridge. Asp191 is an active-site residue.

The protein belongs to the glycosyltransferase 2 family. Monomer in solution.

It participates in spore coat biogenesis; spore coat polysaccharide biosynthesis. In terms of biological role, glycosyltransferase implicated in the synthesis of the spore coat. In Bacillus subtilis (strain 168), this protein is Spore coat polysaccharide biosynthesis protein SpsA (spsA).